A 468-amino-acid chain; its full sequence is Probable Xaa-Pro aminopeptidase PEPP (468 aa).

Residues D264, D275, E398, and E438 each coordinate Mn(2+).

Belongs to the peptidase M24B family. The cofactor is Mn(2+).

The catalysed reaction is Release of any N-terminal amino acid, including proline, that is linked to proline, even from a dipeptide or tripeptide.. Its function is as follows. Catalyzes the removal of a penultimate prolyl residue from the N-termini of peptides. The protein is Probable Xaa-Pro aminopeptidase PEPP (PEPP) of Paracoccidioides brasiliensis (strain Pb03).